The primary structure comprises 299 residues: NAD kinase 1 (299 aa).

The active-site Proton acceptor is the Asp62. NAD(+)-binding positions include 62–63, Lys67, 143–144, Lys173, and Asp175; these read DG and ND.

It belongs to the NAD kinase family. A divalent metal cation is required as a cofactor.

The protein localises to the cytoplasm. It catalyses the reaction NAD(+) + ATP = ADP + NADP(+) + H(+). Its function is as follows. Involved in the regulation of the intracellular balance of NAD and NADP, and is a key enzyme in the biosynthesis of NADP. Catalyzes specifically the phosphorylation on 2'-hydroxyl of the adenosine moiety of NAD to yield NADP. This chain is NAD kinase 1, found in Prochlorococcus marinus subsp. pastoris (strain CCMP1986 / NIES-2087 / MED4).